Consider the following 460-residue polypeptide: 3-isopropylmalate dehydratase large subunit (460 aa).

[4Fe-4S] cluster is bound by residues cysteine 341, cysteine 401, and cysteine 404.

The protein belongs to the aconitase/IPM isomerase family. LeuC type 1 subfamily. As to quaternary structure, heterodimer of LeuC and LeuD. It depends on [4Fe-4S] cluster as a cofactor.

The catalysed reaction is (2R,3S)-3-isopropylmalate = (2S)-2-isopropylmalate. Its pathway is amino-acid biosynthesis; L-leucine biosynthesis; L-leucine from 3-methyl-2-oxobutanoate: step 2/4. Catalyzes the isomerization between 2-isopropylmalate and 3-isopropylmalate, via the formation of 2-isopropylmaleate. The chain is 3-isopropylmalate dehydratase large subunit from Phocaeicola vulgatus (strain ATCC 8482 / DSM 1447 / JCM 5826 / CCUG 4940 / NBRC 14291 / NCTC 11154) (Bacteroides vulgatus).